The chain runs to 1406 residues: MKDLLKFLKAQTKTEEFDAIKIALASPDMIRSWSFGEVKKPETINYRTFKPERDGLFCARIFGPVKDYECLCGKYKRLKHRGVICEKCGVEVTQTKVRRERMGHIELASPTAHIWFLKSLPSRIGLLLDMPLRDIERVLYFESYVVVEGGMTSLERSQILTEEQYLDALEEFGDEFDAKMGAEAIQSLLKNLDLENECETLREELNETNSETKRKKLTKRIKLLEAFIQSGNKPEWMVLTVLPVLPPDLRPLVPLDGGRFATSDLNDLYRRVINRNNRLKRLLDLAAPDIIVRNEKRMLQEAVDALLDNGRRGRAITGSNKRPLKSLADMIKGKQGRFRQNLLGKRVDYSGRSVITVGPYLRLHQCGLPKKMALELFKPFIYGKLELRGLATTIKAAKKMVEREEAVVWDILDEVIREHPVLLNRAPTLHRLGIQAFEPVLIEGKAIQLHPLVCAAYNADFDGDQMAVHVPLTLEAQLEARALMMSTNNILSPASGEPIIVPSQDVVLGLYYMTRDCVNAKGEGMVLTGPKEAERVYRAGLASLHARVKVRITEEVKDGEGNITTNTGLVDTTIGRAILWMIVPRGLPYSLVNQPLGKKAISRMLNTCYRVMGLKPTVIFADQIMYTGFAYAARSGASVGIDDMVIPEKKAGIIAEAEAEVAEIQEQFQSGLVTAGERYNKVIDIWAAANERVAKAMMENLSTETVTNRDGEEEQQVSFNSIFMMADSGARGSAAQIRQLAGMRGLMAKPDGSIIETPITANFREGLNVLQYFISTHGARKGLADTALKTANSGYLTRRLVDVAQDLVVTEDDCGTHDGILMTPVIEGGDVKEPLRERVLGRVTAEDVLKPGTADILVPRNTLLNEKWCDLLEESSVDSIKVRSVVSCETDFGVCANCYGRDLARGHIINKGEAVGVIAAQSIGEPGTQLTMRTFHIGGAASRAAAESSIQVRNKGSLKLFNAKSVTNSAGKLVITSRNTELCLIDEFGRTKESYKVPYGAVLGKGDGETVNGGETVANWDPHTMPVVSEVSGIIRFADMIDGQTITRQTDELTGLSSLVVLDSAERTGSGKDLRPALKIVDAKGDDVLIPGTDMPAQYFLPGKAIVQLDDGVSISAGDTLARIPQESGGTKDITGGLPRVADLFEARRPKEPAILAEVSGIVSFGKETKGKRRLVISPLDGGDAYEEMIPKWRQLNVFEGEVVERGDVISDGPESPHDILRLRGVHAVTRYITNEVQEVYRLQGVKINDKHIEVIVRQMLRKATIESAGSSEFLEGEQVEYARVKVANRKLEQEGKVAATYGRDLLGITKASLATESFISAASFQETTRVLTEAAVAGKRDELRGLKENVIVGRLIPAGTGYAYHQDRIRRRQLNEPAEAPQVSVDEATANLAELLNAGFGGDKK.

Zn(2+)-binding residues include Cys-70, Cys-72, Cys-85, and Cys-88. Mg(2+)-binding residues include Asp-460, Asp-462, and Asp-464. Zn(2+)-binding residues include Cys-814, Cys-888, Cys-895, and Cys-898.

This sequence belongs to the RNA polymerase beta' chain family. In terms of assembly, the RNAP catalytic core consists of 2 alpha, 1 beta, 1 beta' and 1 omega subunit. When a sigma factor is associated with the core the holoenzyme is formed, which can initiate transcription. Mg(2+) is required as a cofactor. Requires Zn(2+) as cofactor.

It catalyses the reaction RNA(n) + a ribonucleoside 5'-triphosphate = RNA(n+1) + diphosphate. Functionally, DNA-dependent RNA polymerase catalyzes the transcription of DNA into RNA using the four ribonucleoside triphosphates as substrates. In Photorhabdus laumondii subsp. laumondii (strain DSM 15139 / CIP 105565 / TT01) (Photorhabdus luminescens subsp. laumondii), this protein is DNA-directed RNA polymerase subunit beta'.